A 367-amino-acid polypeptide reads, in one-letter code: Quinolinate synthase (367 aa).

Positions 45 and 62 each coordinate iminosuccinate. Cys109 is a [4Fe-4S] cluster binding site. Iminosuccinate-binding positions include 140-142 (YVN) and Ser161. Cys229 contributes to the [4Fe-4S] cluster binding site. Iminosuccinate-binding positions include 255 to 257 (HPE) and Thr272. Residue Cys319 participates in [4Fe-4S] cluster binding.

It belongs to the quinolinate synthase family. Type 3 subfamily. It depends on [4Fe-4S] cluster as a cofactor.

Its subcellular location is the cytoplasm. It catalyses the reaction iminosuccinate + dihydroxyacetone phosphate = quinolinate + phosphate + 2 H2O + H(+). It functions in the pathway cofactor biosynthesis; NAD(+) biosynthesis; quinolinate from iminoaspartate: step 1/1. Functionally, catalyzes the condensation of iminoaspartate with dihydroxyacetone phosphate to form quinolinate. The polypeptide is Quinolinate synthase (Lysinibacillus sphaericus (strain C3-41)).